A 330-amino-acid polypeptide reads, in one-letter code: Formylaminopyrimidine-binding protein (330 aa).

The N-terminal stretch at 1–18 (MKSFKIISLLLAILFLAS) is a signal peptide. Cysteine 19 carries N-palmitoyl cysteine lipidation. Cysteine 19 carries the S-diacylglycerol cysteine lipid modification. Substrate-binding positions include 38-39 (DW), tyrosine 90, asparagine 145, tyrosine 188, and glutamate 192.

It belongs to the NMT1 family. In terms of assembly, the complex is likely composed of an ATP-binding protein (ThiZ), a transmembrane protein (ThiX) and a solute-binding protein (ThiY).

Its subcellular location is the cell membrane. The protein operates within cofactor biosynthesis; thiamine diphosphate biosynthesis. Participates in a thiamine pyrimidine salvage pathway as part of the ABC transporter complex ThiXYZ involved in the import of thiamine degradation products. Binds the formylaminopyrimidine N-formyl-4-amino-5-aminomethyl-2-methylpyrimidine (FAMP). Does not bind thiamine. The protein is Formylaminopyrimidine-binding protein of Halalkalibacterium halodurans (strain ATCC BAA-125 / DSM 18197 / FERM 7344 / JCM 9153 / C-125) (Bacillus halodurans).